The following is a 451-amino-acid chain: tRNA-2-methylthio-N(6)-dimethylallyladenosine synthase (451 aa).

An MTTase N-terminal domain is found at 11–127 (RHYHITTFGC…LEDLLQQVFD (117 aa)). Residues Cys20, Cys56, Cys90, Cys162, Cys166, and Cys169 each contribute to the [4Fe-4S] cluster site. A Radical SAM core domain is found at 148–385 (RDSTITAWVN…NHLVAQKAAE (238 aa)). A TRAM domain is found at 388–451 (QRYLGRIEEV…RAFSLTGEIV (64 aa)).

Belongs to the methylthiotransferase family. MiaB subfamily. As to quaternary structure, monomer. [4Fe-4S] cluster is required as a cofactor.

The protein resides in the cytoplasm. It catalyses the reaction N(6)-dimethylallyladenosine(37) in tRNA + (sulfur carrier)-SH + AH2 + 2 S-adenosyl-L-methionine = 2-methylsulfanyl-N(6)-dimethylallyladenosine(37) in tRNA + (sulfur carrier)-H + 5'-deoxyadenosine + L-methionine + A + S-adenosyl-L-homocysteine + 2 H(+). Catalyzes the methylthiolation of N6-(dimethylallyl)adenosine (i(6)A), leading to the formation of 2-methylthio-N6-(dimethylallyl)adenosine (ms(2)i(6)A) at position 37 in tRNAs that read codons beginning with uridine. This is tRNA-2-methylthio-N(6)-dimethylallyladenosine synthase from Rippkaea orientalis (strain PCC 8801 / RF-1) (Cyanothece sp. (strain PCC 8801)).